The primary structure comprises 227 residues: Octanoyltransferase (227 aa).

Residues 34 to 212 form the BPL/LPL catalytic domain; it reads RQREDGLMLL…AFAEVFPVTW (179 aa). Substrate-binding positions include 76–83, 143–145, and 156–158; these read RGGEVTYH, AIA, and GFA. The active-site Acyl-thioester intermediate is Cys174.

This sequence belongs to the LipB family.

It is found in the cytoplasm. The catalysed reaction is octanoyl-[ACP] + L-lysyl-[protein] = N(6)-octanoyl-L-lysyl-[protein] + holo-[ACP] + H(+). It functions in the pathway protein modification; protein lipoylation via endogenous pathway; protein N(6)-(lipoyl)lysine from octanoyl-[acyl-carrier-protein]: step 1/2. Its function is as follows. Catalyzes the transfer of endogenously produced octanoic acid from octanoyl-acyl-carrier-protein onto the lipoyl domains of lipoate-dependent enzymes. Lipoyl-ACP can also act as a substrate although octanoyl-ACP is likely to be the physiological substrate. The chain is Octanoyltransferase from Synechocystis sp. (strain ATCC 27184 / PCC 6803 / Kazusa).